The chain runs to 126 residues: Holo-[acyl-carrier-protein] synthase (126 aa).

Mg(2+)-binding residues include aspartate 9 and glutamate 58.

The protein belongs to the P-Pant transferase superfamily. AcpS family. It depends on Mg(2+) as a cofactor.

It localises to the cytoplasm. It catalyses the reaction apo-[ACP] + CoA = holo-[ACP] + adenosine 3',5'-bisphosphate + H(+). Transfers the 4'-phosphopantetheine moiety from coenzyme A to a Ser of acyl-carrier-protein. The sequence is that of Holo-[acyl-carrier-protein] synthase from Citrobacter koseri (strain ATCC BAA-895 / CDC 4225-83 / SGSC4696).